The sequence spans 78 residues: Acyl carrier protein (78 aa).

Residues 2–77 (STIEERVKKI…AAIDYVNSHK (76 aa)) enclose the Carrier domain. Position 37 is an O-(pantetheine 4'-phosphoryl)serine (Ser37).

It belongs to the acyl carrier protein (ACP) family. In terms of processing, 4'-phosphopantetheine is transferred from CoA to a specific serine of apo-ACP by AcpS. This modification is essential for activity because fatty acids are bound in thioester linkage to the sulfhydryl of the prosthetic group.

Its subcellular location is the cytoplasm. It functions in the pathway lipid metabolism; fatty acid biosynthesis. Its function is as follows. Carrier of the growing fatty acid chain in fatty acid biosynthesis. The chain is Acyl carrier protein from Pseudomonas putida (strain GB-1).